The chain runs to 154 residues: MNTIQGHVVAEGLKFAIVVARFNDFITSKLLDGAEDTLLRHGANGDDIDVVWVPGAFEIPYMAKKLAETEKYDAVITLGTVIRGATTHYDYVCNEAAKGIAQSAMSTGVPIIFGVLTTESIEQAIERAGTKAGNKGSESAAAAIEMANLNRTFR.

5-amino-6-(D-ribitylamino)uracil is bound by residues F22, 56–58 (AFE), and 80–82 (TVI). 85–86 (AT) is a (2S)-2-hydroxy-3-oxobutyl phosphate binding site. H88 (proton donor) is an active-site residue. F113 is a 5-amino-6-(D-ribitylamino)uracil binding site. Residue R127 participates in (2S)-2-hydroxy-3-oxobutyl phosphate binding.

The protein belongs to the DMRL synthase family. Forms an icosahedral capsid composed of 60 subunits, arranged as a dodecamer of pentamers.

The enzyme catalyses (2S)-2-hydroxy-3-oxobutyl phosphate + 5-amino-6-(D-ribitylamino)uracil = 6,7-dimethyl-8-(1-D-ribityl)lumazine + phosphate + 2 H2O + H(+). It participates in cofactor biosynthesis; riboflavin biosynthesis; riboflavin from 2-hydroxy-3-oxobutyl phosphate and 5-amino-6-(D-ribitylamino)uracil: step 1/2. Catalyzes the formation of 6,7-dimethyl-8-ribityllumazine by condensation of 5-amino-6-(D-ribitylamino)uracil with 3,4-dihydroxy-2-butanone 4-phosphate. This is the penultimate step in the biosynthesis of riboflavin. The sequence is that of 6,7-dimethyl-8-ribityllumazine synthase from Bacillus pumilus (strain SAFR-032).